Consider the following 295-residue polypeptide: Acetylglutamate kinase (295 aa).

Substrate is bound by residues 67–68 (GG), Arg-89, and Asn-191.

It belongs to the acetylglutamate kinase family. ArgB subfamily.

It is found in the cytoplasm. The catalysed reaction is N-acetyl-L-glutamate + ATP = N-acetyl-L-glutamyl 5-phosphate + ADP. Its pathway is amino-acid biosynthesis; L-arginine biosynthesis; N(2)-acetyl-L-ornithine from L-glutamate: step 2/4. Its function is as follows. Catalyzes the ATP-dependent phosphorylation of N-acetyl-L-glutamate. The protein is Acetylglutamate kinase of Nitrosomonas eutropha (strain DSM 101675 / C91 / Nm57).